The sequence spans 132 residues: Small ribosomal subunit protein eS24 (132 aa).

The segment at 91–132 (LATHGLYEKKKTSRKQRTERQNRMKKVRSIKKASVGAAGKKN) is disordered. Residues 96–112 (LYEKKKTSRKQRTERQN) show a composition bias toward basic and acidic residues.

The protein belongs to the eukaryotic ribosomal protein eS24 family. In terms of assembly, component of the small ribosomal subunit.

The protein localises to the cytoplasm. Component of the small ribosomal subunit. The ribosome is a large ribonucleoprotein complex responsible for the synthesis of proteins in the cell. Required for processing of pre-rRNA and maturation of 40S ribosomal subunits. The sequence is that of Small ribosomal subunit protein eS24 (rps24) from Oryzias latipes (Japanese rice fish).